We begin with the raw amino-acid sequence, 291 residues long: Tyrosine recombinase XerD (291 aa).

Positions 1–82 (MEEGLIDRLL…ACKRLYIWME (82 aa)) constitute a Core-binding (CB) domain. One can recognise a Tyr recombinase domain in the interval 103–285 (NIPTLITEQQ…ANVWLQGVVK (183 aa)). Active-site residues include Arg-143, Lys-167, His-237, Arg-240, and His-263. Tyr-272 (O-(3'-phospho-DNA)-tyrosine intermediate) is an active-site residue.

This sequence belongs to the 'phage' integrase family. XerD subfamily. In terms of assembly, forms a cyclic heterotetrameric complex composed of two molecules of XerC and two molecules of XerD.

The protein resides in the cytoplasm. In terms of biological role, site-specific tyrosine recombinase, which acts by catalyzing the cutting and rejoining of the recombining DNA molecules. The XerC-XerD complex is essential to convert dimers of the bacterial chromosome into monomers to permit their segregation at cell division. It also contributes to the segregational stability of plasmids. The sequence is that of Tyrosine recombinase XerD from Neisseria meningitidis serogroup B (strain ATCC BAA-335 / MC58).